The primary structure comprises 96 residues: Glutamyl-tRNA(Gln) amidotransferase subunit C (96 aa).

The protein belongs to the GatC family. Heterotrimer of A, B and C subunits.

It catalyses the reaction L-glutamyl-tRNA(Gln) + L-glutamine + ATP + H2O = L-glutaminyl-tRNA(Gln) + L-glutamate + ADP + phosphate + H(+). The enzyme catalyses L-aspartyl-tRNA(Asn) + L-glutamine + ATP + H2O = L-asparaginyl-tRNA(Asn) + L-glutamate + ADP + phosphate + 2 H(+). Functionally, allows the formation of correctly charged Asn-tRNA(Asn) or Gln-tRNA(Gln) through the transamidation of misacylated Asp-tRNA(Asn) or Glu-tRNA(Gln) in organisms which lack either or both of asparaginyl-tRNA or glutaminyl-tRNA synthetases. The reaction takes place in the presence of glutamine and ATP through an activated phospho-Asp-tRNA(Asn) or phospho-Glu-tRNA(Gln). This chain is Glutamyl-tRNA(Gln) amidotransferase subunit C, found in Neisseria meningitidis serogroup B (strain ATCC BAA-335 / MC58).